Here is a 317-residue protein sequence, read N- to C-terminus: Acetyl-coenzyme A carboxylase carboxyl transferase subunit alpha (317 aa).

The CoA carboxyltransferase C-terminal domain occupies 39–293 (KLEDKNRKLT…KDALGASLER (255 aa)).

The protein belongs to the AccA family. In terms of assembly, acetyl-CoA carboxylase is a heterohexamer composed of biotin carboxyl carrier protein (AccB), biotin carboxylase (AccC) and two subunits each of ACCase subunit alpha (AccA) and ACCase subunit beta (AccD).

Its subcellular location is the cytoplasm. It catalyses the reaction N(6)-carboxybiotinyl-L-lysyl-[protein] + acetyl-CoA = N(6)-biotinyl-L-lysyl-[protein] + malonyl-CoA. It participates in lipid metabolism; malonyl-CoA biosynthesis; malonyl-CoA from acetyl-CoA: step 1/1. Component of the acetyl coenzyme A carboxylase (ACC) complex. First, biotin carboxylase catalyzes the carboxylation of biotin on its carrier protein (BCCP) and then the CO(2) group is transferred by the carboxyltransferase to acetyl-CoA to form malonyl-CoA. The protein is Acetyl-coenzyme A carboxylase carboxyl transferase subunit alpha of Chromohalobacter salexigens (strain ATCC BAA-138 / DSM 3043 / CIP 106854 / NCIMB 13768 / 1H11).